A 749-amino-acid chain; its full sequence is Protein O-mannosyl-transferase 2 (749 aa).

The segment at 1–30 (MAASVVKTPKCPRRGSAKEQQSKASPKSNN) is disordered. The helical transmembrane segment at 34–54 (NWHWWILLASVFLITFATRFY) threads the bilayer. Residues Asn-78, Asn-104, and Asn-117 are each glycosylated (N-linked (GlcNAc...) asparagine). The next 5 membrane-spanning stretches (helical) occupy residues 126-146 (YFCTTLGALIMPMGFDTVYDL), 173-193 (ILLDPILLFFMMGSVWGMVKI), 204-224 (SVRWWFWLFLTGTMLSCTISV), 226-246 (FVGLFVVLLVGLHTATELWLI), and 266-286 (IALILWPILLYTLFFYIHLSV). Residues Asn-288 and Asn-312 are each glycosylated (N-linked (GlcNAc...) asparagine). 3 consecutive MIR domains span residues 316–372 (PRDV…IKPH), 382–438 (LQLL…VLIV), and 443–499 (NETV…VEDN). Asn-443 carries an N-linked (GlcNAc...) asparagine glycan. The next 4 membrane-spanning stretches (helical) occupy residues 572-592 (IWWSNLVFLALFVAVFLGNAI), 645-665 (LGAAAWLFVGWLLHYLPFWAM), 669-689 (LYFHHYFPALIFNSLLTGVMF), and 703-723 (VLLGGLLSLIVYSFALFSPLA). A glycan (N-linked (GlcNAc...) asparagine) is linked at Asn-735.

The protein belongs to the glycosyltransferase 39 family. As to quaternary structure, interacts with Rt/POMT1.

The protein resides in the endoplasmic reticulum membrane. It carries out the reaction a di-trans,poly-cis-dolichyl beta-D-mannosyl phosphate + L-seryl-[protein] = 3-O-(alpha-D-mannosyl)-L-seryl-[protein] + a di-trans,poly-cis-dolichyl phosphate + H(+). The enzyme catalyses a di-trans,poly-cis-dolichyl beta-D-mannosyl phosphate + L-threonyl-[protein] = 3-O-(alpha-D-mannosyl)-L-threonyl-[protein] + a di-trans,poly-cis-dolichyl phosphate + H(+). It functions in the pathway protein modification; protein glycosylation. Rt/POMT1 and tw/POMT2 function as a protein O-mannosyltransferase in association with each other to generate and maintain normal muscle development. This is Protein O-mannosyl-transferase 2 from Drosophila pseudoobscura pseudoobscura (Fruit fly).